The primary structure comprises 62 residues: Alpha-elapitoxin-Pc1 (62 aa).

Disulfide bonds link Cys-3/Cys-24, Cys-17/Cys-41, Cys-43/Cys-54, and Cys-55/Cys-60.

Belongs to the three-finger toxin family. Short-chain subfamily. Type I alpha-neurotoxin sub-subfamily. As to expression, expressed by the venom gland.

Its subcellular location is the secreted. Bird-specific neurotoxin (tested on chicken) that acts as pseudo-irreversible antagonists at the nicotinic acetylcholine receptor (nAChR) of the skeletal neuromuscular junction. Has no significant effect on the electrically-induced twitches of the rat isolated phrenic nerve-diaphragm preparation. This is Alpha-elapitoxin-Pc1 from Pseudechis colletti (Collett's snake).